Here is a 463-residue protein sequence, read N- to C-terminus: Fumarate hydratase class II (463 aa).

Substrate contacts are provided by residues 98-100 (SGT), 129-132 (HPND), 139-141 (SSN), and Thr187. His188 (proton donor/acceptor) is an active-site residue. The active site involves Ser318. Substrate is bound by residues Ser319 and 324 to 326 (KVN).

This sequence belongs to the class-II fumarase/aspartase family. Fumarase subfamily. In terms of assembly, homotetramer.

Its subcellular location is the cytoplasm. The catalysed reaction is (S)-malate = fumarate + H2O. It participates in carbohydrate metabolism; tricarboxylic acid cycle; (S)-malate from fumarate: step 1/1. Involved in the TCA cycle. Catalyzes the stereospecific interconversion of fumarate to L-malate. This is Fumarate hydratase class II from Rhizobium meliloti (strain 1021) (Ensifer meliloti).